Consider the following 246-residue polypeptide: Aquaporin AqpM (246 aa).

Over 1 to 11 the chain is Cytoplasmic; the sequence is MVSLTKRCIAE. Residues 12–32 form a helical membrane-spanning segment; that stretch reads FIGTFILVFFGAGSAAVTLMI. Over 33-55 the chain is Extracellular; it reads ASGGTSPNPFNIGIGLLGGLGDW. A helical transmembrane segment spans residues 56 to 76; that stretch reads VAIGLAFGFAIAASIYALGNI. Residues 77-103 lie on the Cytoplasmic side of the membrane; it reads SGCHINPAVTIGLWSVKKFPGREVVPY. Residues 82 to 84 carry the NPA 1 motif; the sequence is NPA. A helical membrane pass occupies residues 104 to 124; that stretch reads IIAQLLGAAFGSFIFLQCAGI. Residues 125-145 lie on the Extracellular side of the membrane; that stretch reads GAATVGGLGATAPFPGISYWQ. A helical transmembrane segment spans residues 146-166; it reads AMLAEVVGTFLLMITIMGIAV. Topologically, residues 167–172 are cytoplasmic; sequence DERAPK. Residues 173–193 traverse the membrane as a helical segment; that stretch reads GFAGIIIGLTVAGIITTLGNI. Over 194 to 217 the chain is Extracellular; the sequence is SGSSLNPARTFGPYLNDMIFAGTN. Positions 199 to 201 match the NPA 2 motif; it reads NPA. Residues 218–238 traverse the membrane as a helical segment; that stretch reads LWNYYPIYVIGPIVGAVLAAL. Residues 239-246 lie on the Cytoplasmic side of the membrane; it reads TYQYLTSE.

This sequence belongs to the MIP/aquaporin (TC 1.A.8) family. Homotetramer.

Its subcellular location is the cell membrane. In terms of biological role, channel that permits osmotically driven movement of water in both directions. It mediates rapid entry or exit of water in response to abrupt changes in osmolarity. Also exhibits a transient but reproducible increase in the initial glycerol flux. The protein is Aquaporin AqpM (aqpM) of Methanothermobacter marburgensis (strain ATCC BAA-927 / DSM 2133 / JCM 14651 / NBRC 100331 / OCM 82 / Marburg) (Methanobacterium thermoautotrophicum).